We begin with the raw amino-acid sequence, 596 residues long: Elongation factor 4 (596 aa).

Residues 2–183 (ENIRNFSIIA…AIIERIPAPS (182 aa)) enclose the tr-type G domain. Residues 14-19 (DHGKST) and 130-133 (NKID) contribute to the GTP site.

This sequence belongs to the TRAFAC class translation factor GTPase superfamily. Classic translation factor GTPase family. LepA subfamily.

It is found in the cell inner membrane. It catalyses the reaction GTP + H2O = GDP + phosphate + H(+). Required for accurate and efficient protein synthesis under certain stress conditions. May act as a fidelity factor of the translation reaction, by catalyzing a one-codon backward translocation of tRNAs on improperly translocated ribosomes. Back-translocation proceeds from a post-translocation (POST) complex to a pre-translocation (PRE) complex, thus giving elongation factor G a second chance to translocate the tRNAs correctly. Binds to ribosomes in a GTP-dependent manner. This chain is Elongation factor 4, found in Nitratiruptor sp. (strain SB155-2).